A 139-amino-acid polypeptide reads, in one-letter code: Translation initiation factor 5A (139 aa).

At K36 the chain carries Hypusine.

It belongs to the eIF-5A family.

The protein resides in the cytoplasm. Functions by promoting the formation of the first peptide bond. The sequence is that of Translation initiation factor 5A (eif5a) from Aeropyrum pernix (strain ATCC 700893 / DSM 11879 / JCM 9820 / NBRC 100138 / K1).